The primary structure comprises 192 residues: Elongation factor P (192 aa).

The protein belongs to the elongation factor P family.

The protein localises to the cytoplasm. The protein operates within protein biosynthesis; polypeptide chain elongation. Involved in peptide bond synthesis. Stimulates efficient translation and peptide-bond synthesis on native or reconstituted 70S ribosomes in vitro. Probably functions indirectly by altering the affinity of the ribosome for aminoacyl-tRNA, thus increasing their reactivity as acceptors for peptidyl transferase. The sequence is that of Elongation factor P from Borrelia recurrentis (strain A1).